Consider the following 449-residue polypeptide: MESSPIPQSSGNSSTLGRALQTPGPSTASGVPELGLRDVASESVALFFMLLLDLTAVAGNAAVMAVIAKTPALRKFVFVFHLCLVDLLAALTLMPLAMLSSSALFDHALFGEVACRLYLFLSVCFVSLAILSVSAINVERYYYVVHPMRYEVRMTLGLVASVLVGVWVKALAMASVPVLGRVYWEEGAPSVNPGCSLQWSHSAYCQLFVVVFAVLYFLLPLILIFVVYCSMFRVARVAAMQHGPLPTWMETPRQRSESLSSRSTMVTSSGAHQTTPHRTFGGGKAAVVLLAVGGQFLLCWLPYFSFHLYVALSAQPISAGQVENVVTWIGYFCFTSNPFFYGCLNRQIRGELSKQFVCFFKAAPEEELRLPSREGSIEENFLQFLQGTSENWVSRPLPSPKREPPPVVDFRIPGQIAEETSEFLEQQLTSDIIMSDSYLRPAPSPRLES.

A compositionally biased stretch (low complexity) spans 1–14; the sequence is MESSPIPQSSGNSS. The interval 1-29 is disordered; that stretch reads MESSPIPQSSGNSSTLGRALQTPGPSTAS. At 1 to 44 the chain is on the extracellular side; it reads MESSPIPQSSGNSSTLGRALQTPGPSTASGVPELGLRDVASESV. Asparagine 12 is a glycosylation site (N-linked (GlcNAc...) asparagine). The chain crosses the membrane as a helical span at residues 45–67; it reads ALFFMLLLDLTAVAGNAAVMAVI. Residues 68 to 75 lie on the Cytoplasmic side of the membrane; that stretch reads AKTPALRK. The chain crosses the membrane as a helical span at residues 76–98; the sequence is FVFVFHLCLVDLLAALTLMPLAM. Over 99-112 the chain is Extracellular; the sequence is LSSSALFDHALFGE. A helical membrane pass occupies residues 113–135; it reads VACRLYLFLSVCFVSLAILSVSA. The Cytoplasmic segment spans residues 136 to 155; the sequence is INVERYYYVVHPMRYEVRMT. The chain crosses the membrane as a helical span at residues 156–178; it reads LGLVASVLVGVWVKALAMASVPV. The Extracellular portion of the chain corresponds to 179 to 206; sequence LGRVYWEEGAPSVNPGCSLQWSHSAYCQ. The helical transmembrane segment at 207–229 threads the bilayer; sequence LFVVVFAVLYFLLPLILIFVVYC. The Cytoplasmic portion of the chain corresponds to 230–287; it reads SMFRVARVAAMQHGPLPTWMETPRQRSESLSSRSTMVTSSGAHQTTPHRTFGGGKAAV. The chain crosses the membrane as a helical span at residues 288–310; that stretch reads VLLAVGGQFLLCWLPYFSFHLYV. Residues 311–324 are Extracellular-facing; that stretch reads ALSAQPISAGQVEN. The chain crosses the membrane as a helical span at residues 325 to 344; the sequence is VVTWIGYFCFTSNPFFYGCL. Topologically, residues 345–449 are cytoplasmic; the sequence is NRQIRGELSK…RPAPSPRLES (105 aa).

The protein belongs to the G-protein coupled receptor 1 family. In terms of assembly, forms heterodimer with MTNR1B. Interacts with ARRB1 and ARRB2 in a spontaneous and agonist-independent manner; leading to the internalization of GPR61 in the endosomal compartment. Predominantly expressed in the brain and testes, with relatively lower expression observed in the eye, adrenal gland and pituitary gland.

The protein localises to the cell membrane. The protein resides in the endosome membrane. In terms of biological role, orphan G-protein coupled receptor. Constitutively activates the G(s)-alpha/cAMP signaling pathway. Shows a reciprocal regulatory interaction with the melatonin receptor MTNR1B most likely through receptor heteromerization. May be involved in the regulation of food intake and body weight. The sequence is that of G-protein coupled receptor 61 (Gpr61) from Mus musculus (Mouse).